Here is a 131-residue protein sequence, read N- to C-terminus: Translation initiation factor 5A (131 aa).

K37 carries the hypusine modification.

This sequence belongs to the eIF-5A family.

The protein localises to the cytoplasm. Its function is as follows. Functions by promoting the formation of the first peptide bond. The polypeptide is Translation initiation factor 5A (Methanococcus maripaludis (strain DSM 14266 / JCM 13030 / NBRC 101832 / S2 / LL)).